The chain runs to 353 residues: MTIAIGKSSKEPKDLFDSMDDWLRRDRFVFVGWSGLLLFPTAYFALGGWFTGTTFVTSWYTHGLASSYLEGCNFLTAAVSTPANSLAHSLLLLWGPEAQGDFTRWCQLGGLWTFVALHGSFALIGFMLRQFELARSVQLRPYNAVAFSGPIAVFVSVFLIYPLGQSGWFFAPSFGVAAIFRFILFFQGFHNWTLNPFHMMGVAGVLGAALLCAIHGATVENTLFEDGDGANTFRAFNPTQSEETYSMVTANRFWSQIFGVAFSNKRWLHFFMLFVPVTGLWMSAIGVVGLALNLRAYDFVSQEIRAAEDPEFETFYTKNILLNEGIRAWMAAQDQPHENLVFPEEVLPRGNAL.

An N-acetylthreonine modification is found at Thr-2. Thr-2 carries the phosphothreonine modification. The helical transmembrane segment at 41–61 (TAYFALGGWFTGTTFVTSWYT) threads the bilayer. His-118 provides a ligand contact to chlorophyll a. A helical membrane pass occupies residues 125-141 (GFMLRQFELARSVQLRP). Pheophytin a-binding residues include Gln-130 and Asn-143. The helical transmembrane segment at 153 to 166 (VFVSVFLIYPLGQS) threads the bilayer. His-198 serves as a coordination point for chlorophyll a. Residues 208-228 (AALLCAIHGATVENTLFEDGD) form a helical membrane-spanning segment. Residues His-215 and Phe-262 each contribute to the a plastoquinone site. His-215 provides a ligand contact to Fe cation. His-269 lines the Fe cation pocket. A helical membrane pass occupies residues 279–295 (GLWMSAIGVVGLALNLR).

The protein belongs to the reaction center PufL/M/PsbA/D family. PSII is composed of 1 copy each of membrane proteins PsbA, PsbB, PsbC, PsbD, PsbE, PsbF, PsbH, PsbI, PsbJ, PsbK, PsbL, PsbM, PsbT, PsbX, PsbY, PsbZ, Psb30/Ycf12, at least 3 peripheral proteins of the oxygen-evolving complex and a large number of cofactors. It forms dimeric complexes. Requires The D1/D2 heterodimer binds P680, chlorophylls that are the primary electron donor of PSII, and subsequent electron acceptors. It shares a non-heme iron and each subunit binds pheophytin, quinone, additional chlorophylls, carotenoids and lipids. There is also a Cl(-1) ion associated with D1 and D2, which is required for oxygen evolution. The PSII complex binds additional chlorophylls, carotenoids and specific lipids. as cofactor.

The protein resides in the plastid. The protein localises to the chloroplast thylakoid membrane. The catalysed reaction is 2 a plastoquinone + 4 hnu + 2 H2O = 2 a plastoquinol + O2. Photosystem II (PSII) is a light-driven water:plastoquinone oxidoreductase that uses light energy to abstract electrons from H(2)O, generating O(2) and a proton gradient subsequently used for ATP formation. It consists of a core antenna complex that captures photons, and an electron transfer chain that converts photonic excitation into a charge separation. The D1/D2 (PsbA/PsbD) reaction center heterodimer binds P680, the primary electron donor of PSII as well as several subsequent electron acceptors. D2 is needed for assembly of a stable PSII complex. The chain is Photosystem II D2 protein from Adiantum capillus-veneris (Maidenhair fern).